The primary structure comprises 120 residues: Ribonuclease P protein component (120 aa).

It belongs to the RnpA family. In terms of assembly, consists of a catalytic RNA component (M1 or rnpB) and a protein subunit.

The catalysed reaction is Endonucleolytic cleavage of RNA, removing 5'-extranucleotides from tRNA precursor.. In terms of biological role, RNaseP catalyzes the removal of the 5'-leader sequence from pre-tRNA to produce the mature 5'-terminus. It can also cleave other RNA substrates such as 4.5S RNA. The protein component plays an auxiliary but essential role in vivo by binding to the 5'-leader sequence and broadening the substrate specificity of the ribozyme. The polypeptide is Ribonuclease P protein component (Mycobacterium marinum (strain ATCC BAA-535 / M)).